We begin with the raw amino-acid sequence, 343 residues long: MTDKVRLTTMVQAAGUAAKLGPAGLEEAIHDITRSDDPNLIVGVEGAEDAGIYRIGDNLALVETTDIITPLVDDPFTFGRIAAANALSDVYAMGGRPVTAMNLAFFPACSLPTKVLAAILAGGSDALKEAGACLVGGHTVEDNELKFGLAVTGLIDPARVVRNCTARPGDLIVITKPLGTGIVSTAIKAEMVEPVLEAEATRWMTILNAQAAELMVACRATAATDVTGFGFIGHACEMALGAKVTFRIELARVPVIPGVPALIDDGLVPAGCYRNRQHYEQHVSGKSGDPLLPLFDPQTSGGLLITFAPDDARTFLSRAGEEGLFAACIGEVEPAGGTPLVFV.

U16 is an active-site residue. Position 16 (U16) is a non-standard amino acid, selenocysteine. ATP-binding positions include K19 and 46–48 (GAE). D49 is a Mg(2+) binding site. Residues D66, D89, and 137 to 139 (GHT) contribute to the ATP site. D89 is a binding site for Mg(2+). A Mg(2+)-binding site is contributed by D225.

It belongs to the selenophosphate synthase 1 family. Class I subfamily. Homodimer. Requires Mg(2+) as cofactor.

It carries out the reaction hydrogenselenide + ATP + H2O = selenophosphate + AMP + phosphate + 2 H(+). In terms of biological role, synthesizes selenophosphate from selenide and ATP. The polypeptide is Selenide, water dikinase (Geobacter sp. (strain M21)).